The following is a 189-amino-acid chain: Elongation factor P (189 aa).

It belongs to the elongation factor P family.

It is found in the cytoplasm. It functions in the pathway protein biosynthesis; polypeptide chain elongation. Its function is as follows. Involved in peptide bond synthesis. Stimulates efficient translation and peptide-bond synthesis on native or reconstituted 70S ribosomes in vitro. Probably functions indirectly by altering the affinity of the ribosome for aminoacyl-tRNA, thus increasing their reactivity as acceptors for peptidyl transferase. The chain is Elongation factor P from Rhizobium radiobacter (Agrobacterium tumefaciens).